The sequence spans 115 residues: Large ribosomal subunit protein bL19 (115 aa).

The protein belongs to the bacterial ribosomal protein bL19 family.

In terms of biological role, this protein is located at the 30S-50S ribosomal subunit interface and may play a role in the structure and function of the aminoacyl-tRNA binding site. This chain is Large ribosomal subunit protein bL19, found in Hydrogenovibrio crunogenus (strain DSM 25203 / XCL-2) (Thiomicrospira crunogena).